A 316-amino-acid chain; its full sequence is Pantothenate kinase (316 aa).

An ATP-binding site is contributed by 95 to 102 (GSVAVGKS).

It belongs to the prokaryotic pantothenate kinase family.

The protein resides in the cytoplasm. The enzyme catalyses (R)-pantothenate + ATP = (R)-4'-phosphopantothenate + ADP + H(+). It participates in cofactor biosynthesis; coenzyme A biosynthesis; CoA from (R)-pantothenate: step 1/5. The sequence is that of Pantothenate kinase from Shewanella putrefaciens (strain CN-32 / ATCC BAA-453).